The following is a 474-amino-acid chain: Cbb3-type cytochrome c oxidase subunit CcoN1 (474 aa).

Residues Met-1–Gln-16 are Cytoplasmic-facing. The helical transmembrane segment at Phe-17–Ala-37 threads the bilayer. Over Gln-38 to His-60 the chain is Periplasmic. His-60 provides a ligand contact to heme b. Residues Thr-61–Val-81 traverse the membrane as a helical segment. The Cytoplasmic portion of the chain corresponds to Gln-82–Ala-96. A helical membrane pass occupies residues Phe-97–Phe-117. Residues Thr-118–Pro-129 lie on the Periplasmic side of the membrane. Residues Ile-130–Ala-150 form a helical membrane-spanning segment. Residues Lys-151–His-156 are Cytoplasmic-facing. A helical transmembrane segment spans residues Ile-157 to Val-177. Residues Asn-178–Tyr-205 lie on the Periplasmic side of the membrane. The helical transmembrane segment at Gly-206–Val-226 threads the bilayer. Cu cation is bound at residue His-207. Residues Pro-227–Arg-238 lie on the Cytoplasmic side of the membrane. The chain crosses the membrane as a helical span at residues Leu-239–Leu-259. His-257 and His-258 together coordinate Cu cation. The Periplasmic portion of the chain corresponds to His-260–Ser-270. The helical transmembrane segment at Leu-271 to Met-291 threads the bilayer. Topologically, residues Met-292–Arg-308 are cytoplasmic. The helical transmembrane segment at Phe-309 to Ile-329 threads the bilayer. Over Lys-330 to His-345 the chain is Periplasmic. His-345 and His-347 together coordinate heme b. A helical transmembrane segment spans residues Val-346–Val-366. Residues Pro-367–His-384 lie on the Cytoplasmic side of the membrane. The helical transmembrane segment at Phe-385–Ala-405 threads the bilayer. Over Gln-406 to Pro-432 the chain is Periplasmic. The helical transmembrane segment at Gly-433–Tyr-453 threads the bilayer. The Cytoplasmic segment spans residues Asn-454–Ala-474.

The protein belongs to the heme-copper respiratory oxidase family. In terms of assembly, component of the cbb3-type cytochrome c oxidase at least composed of CcoN, CcoO, CcoQ and CcoP. It depends on Cu(2+) as a cofactor. The cofactor is heme b.

The protein resides in the cell inner membrane. It catalyses the reaction 4 Fe(II)-[cytochrome c] + O2 + 8 H(+)(in) = 4 Fe(III)-[cytochrome c] + 2 H2O + 4 H(+)(out). It functions in the pathway energy metabolism; oxidative phosphorylation. Cbb3-type cytochrome c oxidase is the component of the respiratory chain that catalyzes the reduction of oxygen to water. Subunits CcoN and CcoO form the functional core of the enzyme complex. Subunits CcoP and CcoQ may optionally bind to the core. CcoN is the catalytic subunit of the enzyme. Electrons originating in cytochrome c or a quinol are transferred to the bimetallic center formed by a high-spin heme and copper B. The complex also functions as a proton pump. This Stutzerimonas stutzeri (Pseudomonas stutzeri) protein is Cbb3-type cytochrome c oxidase subunit CcoN1.